We begin with the raw amino-acid sequence, 196 residues long: ATP-dependent Clp protease proteolytic subunit (196 aa).

The active-site Nucleophile is the Ser-98. His-123 is an active-site residue.

It belongs to the peptidase S14 family. As to quaternary structure, fourteen ClpP subunits assemble into 2 heptameric rings which stack back to back to give a disk-like structure with a central cavity, resembling the structure of eukaryotic proteasomes.

The protein localises to the cytoplasm. It carries out the reaction Hydrolysis of proteins to small peptides in the presence of ATP and magnesium. alpha-casein is the usual test substrate. In the absence of ATP, only oligopeptides shorter than five residues are hydrolyzed (such as succinyl-Leu-Tyr-|-NHMec, and Leu-Tyr-Leu-|-Tyr-Trp, in which cleavage of the -Tyr-|-Leu- and -Tyr-|-Trp bonds also occurs).. Cleaves peptides in various proteins in a process that requires ATP hydrolysis. Has a chymotrypsin-like activity. Plays a major role in the degradation of misfolded proteins. The protein is ATP-dependent Clp protease proteolytic subunit of Sulfurimonas denitrificans (strain ATCC 33889 / DSM 1251) (Thiomicrospira denitrificans (strain ATCC 33889 / DSM 1251)).